The primary structure comprises 61 residues: Small ribosomal subunit protein uS14 (61 aa).

Zn(2+)-binding residues include Cys-24, Cys-27, Cys-40, and Cys-43.

Belongs to the universal ribosomal protein uS14 family. Zinc-binding uS14 subfamily. In terms of assembly, part of the 30S ribosomal subunit. Contacts proteins S3 and S10. Requires Zn(2+) as cofactor.

Binds 16S rRNA, required for the assembly of 30S particles and may also be responsible for determining the conformation of the 16S rRNA at the A site. This is Small ribosomal subunit protein uS14 from Streptococcus thermophilus (strain CNRZ 1066).